Reading from the N-terminus, the 754-residue chain is Condensin complex subunit 2 (754 aa).

Residues 104–149 (LAQRKTNGASNGDDSNGGNGEGLGGDSDEANIEIDPLTGMPISNDP) are disordered. The segment covering 118 to 128 (SNGGNGEGLGG) has biased composition (gly residues). At S245 the chain carries Phosphoserine. The tract at residues 359–379 (CYPDENHDNTSHDEQDDDNVN) is disordered. Over residues 362–371 (DENHDNTSHD) the composition is skewed to basic and acidic residues. S548 is subject to Phosphoserine. The disordered stretch occupies residues 665 to 688 (HDSRKNREQSSNDSETHTEDESTK).

The protein belongs to the CND2 (condensin subunit 2) family. In terms of assembly, component of the condensin complex, which contains the SMC2 and SMC4 heterodimer, and three non SMC subunits that probably regulate the complex: BRN1, YCS4 and YCG1/YCS5.

The protein resides in the nucleus. It is found in the cytoplasm. Its subcellular location is the chromosome. Functionally, regulatory subunit of the condensin complex, a complex required for conversion of interphase chromatin into mitotic-like condense chromosomes. The condensin complex probably introduces positive supercoils into relaxed DNA in the presence of type I topoisomerases and converts nicked DNA into positive knotted forms in the presence of type II topoisomerases. The condensin complex probably also plays a role during interphase. The chain is Condensin complex subunit 2 (BRN1) from Saccharomyces cerevisiae (strain ATCC 204508 / S288c) (Baker's yeast).